A 77-amino-acid chain; its full sequence is Translational regulator CsrA (77 aa).

The protein belongs to the CsrA/RsmA family. As to quaternary structure, homodimer; the beta-strands of each monomer intercalate to form a hydrophobic core, while the alpha-helices form wings that extend away from the core.

The protein localises to the cytoplasm. A translational regulator that binds mRNA to regulate translation initiation and/or mRNA stability. Usually binds in the 5'-UTR at or near the Shine-Dalgarno sequence preventing ribosome-binding, thus repressing translation. Its main target seems to be the major flagellin gene, while its function is anatagonized by FliW. The polypeptide is Translational regulator CsrA (Desulfitobacterium hafniense (strain Y51)).